The primary structure comprises 404 residues: Sialidase (404 aa).

The signal sequence occupies residues 1 to 27 (MKKFIKILKVLSMAIVLSACNINGIFA). Position 55 (arginine 55) interacts with substrate. Catalysis depends on aspartate 80, which acts as the Proton acceptor. BNR repeat units follow at residues 89–100 (AKSTDNGQTWDY), 158–169 (VYSDDNGETWSD), and 226–237 (IYSKDNGETWTM). Arginine 263 provides a ligand contact to substrate. Residues 273-284 (YISYDMGSTWEV) form a BNR 4 repeat. The active-site Nucleophile is tyrosine 365.

It belongs to the glycosyl hydrolase 33 family. Post-translationally, it is possible that the sialidase is cleaved in front of a cysteine within the leader peptide, forming a glyceride thioether bond which links the protein to the membrane. A second proteolytic cleavage releases the mature extracellular protein.

It localises to the secreted. The catalysed reaction is Hydrolysis of alpha-(2-&gt;3)-, alpha-(2-&gt;6)-, alpha-(2-&gt;8)- glycosidic linkages of terminal sialic acid residues in oligosaccharides, glycoproteins, glycolipids, colominic acid and synthetic substrates.. Functionally, sialidases have been suggested to be pathogenic factors in microbial infections. The protein is Sialidase of Paraclostridium sordellii (Clostridium sordellii).